A 749-amino-acid chain; its full sequence is Probable galactinol--sucrose galactosyltransferase 6 (749 aa).

This sequence belongs to the glycosyl hydrolases 36 family.

The catalysed reaction is alpha-D-galactosyl-(1-&gt;3)-1D-myo-inositol + sucrose = raffinose + myo-inositol. Its function is as follows. Transglycosidase operating by a ping-pong reaction mechanism. Involved in the synthesis of raffinose, a major soluble carbohydrate in seeds, roots and tubers. The protein is Probable galactinol--sucrose galactosyltransferase 6 (RFS6) of Arabidopsis thaliana (Mouse-ear cress).